Reading from the N-terminus, the 354-residue chain is Anthranilate phosphoribosyltransferase (354 aa).

5-phospho-alpha-D-ribose 1-diphosphate is bound by residues glycine 94, 97-98 (GD), threonine 102, 104-107 (NIST), 122-130 (KHGNRAASS), and serine 134. Glycine 94 lines the anthranilate pocket. Residue serine 106 participates in Mg(2+) binding. Asparagine 125 is a binding site for anthranilate. Arginine 180 contributes to the anthranilate binding site. Mg(2+)-binding residues include aspartate 238 and glutamate 239.

The protein belongs to the anthranilate phosphoribosyltransferase family. As to quaternary structure, homodimer. The cofactor is Mg(2+).

The enzyme catalyses N-(5-phospho-beta-D-ribosyl)anthranilate + diphosphate = 5-phospho-alpha-D-ribose 1-diphosphate + anthranilate. It functions in the pathway amino-acid biosynthesis; L-tryptophan biosynthesis; L-tryptophan from chorismate: step 2/5. In terms of biological role, catalyzes the transfer of the phosphoribosyl group of 5-phosphorylribose-1-pyrophosphate (PRPP) to anthranilate to yield N-(5'-phosphoribosyl)-anthranilate (PRA). The protein is Anthranilate phosphoribosyltransferase of Streptomyces avermitilis (strain ATCC 31267 / DSM 46492 / JCM 5070 / NBRC 14893 / NCIMB 12804 / NRRL 8165 / MA-4680).